The primary structure comprises 571 residues: Potassium-transporting ATPase potassium-binding subunit (571 aa).

12 consecutive transmembrane segments (helical) span residues 5–25 (GWMQ…PLGG), 64–84 (LAYA…LYAL), 136–156 (GLTH…VALI), 179–199 (LYVL…QGMP), 220–240 (VGPV…GGFF), 254–274 (LSNF…TNVF), 285–305 (WAIL…TYWA), 330–350 (FGIA…CGAV), 375–395 (IIGG…VAIF), 421–441 (MLGI…ATVV), 488–508 (LAIG…AIAG), and 527–547 (GGLF…LTFF).

The protein belongs to the KdpA family. As to quaternary structure, the system is composed of three essential subunits: KdpA, KdpB and KdpC.

It is found in the cell inner membrane. Its function is as follows. Part of the high-affinity ATP-driven potassium transport (or Kdp) system, which catalyzes the hydrolysis of ATP coupled with the electrogenic transport of potassium into the cytoplasm. This subunit binds the periplasmic potassium ions and delivers the ions to the membrane domain of KdpB through an intramembrane tunnel. This Methylorubrum extorquens (strain CM4 / NCIMB 13688) (Methylobacterium extorquens) protein is Potassium-transporting ATPase potassium-binding subunit.